The primary structure comprises 586 residues: Arginine--tRNA ligase (586 aa).

Residues 131 to 141 carry the 'HIGH' region motif; it reads ANPTGPMHVGH.

The protein belongs to the class-I aminoacyl-tRNA synthetase family. Monomer.

It localises to the cytoplasm. It catalyses the reaction tRNA(Arg) + L-arginine + ATP = L-arginyl-tRNA(Arg) + AMP + diphosphate. The chain is Arginine--tRNA ligase from Azorhizobium caulinodans (strain ATCC 43989 / DSM 5975 / JCM 20966 / LMG 6465 / NBRC 14845 / NCIMB 13405 / ORS 571).